The following is a 299-amino-acid chain: MKPDAAQVKTFLLQLQDSLCQQLSAVDGAPFIEDAWQREGGGGGRSRVLREGRVFEQAGVNFSHVHGDAMPASATAHRPELAGRSFEAMGVSLVVHPLNPYVPTSHANVRFFIAEKPGADPVWWFGGGFDLTPYYGFEEDAVHWHRTARDLCLPFGEEVYPRYKKWCDDYFYLKHRQEQRGIGGLFFDDLNTPDFDHCFAFMQAVGNGYADAYLPIVERRKATPYGERERHFQLYRRGRYVEFNLVWDRGTLFGLQTGGRTESILMSMPPLVRWEYDYQPEPGSPEAALSEFIQVRDWL.

Residue Ser92 participates in substrate binding. Residues His96 and His106 each contribute to the a divalent metal cation site. His106 serves as the catalytic Proton donor. Residue 108–110 (NVR) participates in substrate binding. 2 residues coordinate a divalent metal cation: His145 and His175. Residues 240–275 (YVEFNLVWDRGTLFGLQTGGRTESILMSMPPLVRWE) form an important for dimerization region. A substrate-binding site is contributed by 258 to 260 (GGR).

It belongs to the aerobic coproporphyrinogen-III oxidase family. As to quaternary structure, homodimer. Requires a divalent metal cation as cofactor.

The protein resides in the cytoplasm. The enzyme catalyses coproporphyrinogen III + O2 + 2 H(+) = protoporphyrinogen IX + 2 CO2 + 2 H2O. Its pathway is porphyrin-containing compound metabolism; protoporphyrin-IX biosynthesis; protoporphyrinogen-IX from coproporphyrinogen-III (O2 route): step 1/1. Functionally, involved in the heme biosynthesis. Catalyzes the aerobic oxidative decarboxylation of propionate groups of rings A and B of coproporphyrinogen-III to yield the vinyl groups in protoporphyrinogen-IX. This is Oxygen-dependent coproporphyrinogen-III oxidase from Klebsiella pneumoniae subsp. pneumoniae (strain ATCC 700721 / MGH 78578).